We begin with the raw amino-acid sequence, 467 residues long: Hydroxyacid-oxoacid transhydrogenase, mitochondrial (467 aa).

N6-acetyllysine is present on Lys445. Ser452 is modified (phosphoserine).

This sequence belongs to the iron-containing alcohol dehydrogenase family. Hydroxyacid-oxoacid transhydrogenase subfamily. In terms of tissue distribution, only expressed in adult liver.

Its subcellular location is the mitochondrion. It catalyses the reaction (S)-3-hydroxybutanoate + 2-oxoglutarate = (R)-2-hydroxyglutarate + acetoacetate. The enzyme catalyses 4-hydroxybutanoate + 2-oxoglutarate = (R)-2-hydroxyglutarate + succinate semialdehyde. Catalyzes the cofactor-independent reversible oxidation of gamma-hydroxybutyrate (GHB) to succinic semialdehyde (SSA) coupled to reduction of 2-ketoglutarate (2-KG) to D-2-hydroxyglutarate (D-2-HG). D,L-3-hydroxyisobutyrate and L-3-hydroxybutyrate (L-3-OHB) are also substrates for HOT with 10-fold lower activities. This chain is Hydroxyacid-oxoacid transhydrogenase, mitochondrial (ADHFE1), found in Homo sapiens (Human).